Reading from the N-terminus, the 545-residue chain is Membrane protein insertase YidC (545 aa).

Residues 8–28 form a helical membrane-spanning segment; the sequence is ILLATVLSVGILILWQVIFPK. The tract at residues 31–69 is disordered; it reads PPKPAPTPAAEVAKPAAPAAPAPGAAAPAVPAPPPDAPE. Over residues 38-59 the composition is skewed to low complexity; it reads PAAEVAKPAAPAAPAPGAAAPA. The next 5 membrane-spanning stretches (helical) occupy residues 325-345, 355-375, 421-441, 458-478, and 497-517; these read IDYG…LYVM, WGVA…PLTY, LGGC…YAAL, LTAH…SFVM, and FFPG…TLYI.

It belongs to the OXA1/ALB3/YidC family. Type 1 subfamily. Interacts with the Sec translocase complex via SecD. Specifically interacts with transmembrane segments of nascent integral membrane proteins during membrane integration.

Its subcellular location is the cell inner membrane. Functionally, required for the insertion and/or proper folding and/or complex formation of integral membrane proteins into the membrane. Involved in integration of membrane proteins that insert both dependently and independently of the Sec translocase complex, as well as at least some lipoproteins. Aids folding of multispanning membrane proteins. The chain is Membrane protein insertase YidC from Anaeromyxobacter dehalogenans (strain 2CP-C).